Here is a 438-residue protein sequence, read N- to C-terminus: Serine hydroxymethyltransferase (438 aa).

Residues Leu133 and 137–139 (GHL) each bind (6S)-5,6,7,8-tetrahydrofolate. Position 242 is an N6-(pyridoxal phosphate)lysine (Lys242).

Belongs to the SHMT family. As to quaternary structure, homodimer. Pyridoxal 5'-phosphate serves as cofactor.

Its subcellular location is the cytoplasm. It carries out the reaction (6R)-5,10-methylene-5,6,7,8-tetrahydrofolate + glycine + H2O = (6S)-5,6,7,8-tetrahydrofolate + L-serine. It participates in one-carbon metabolism; tetrahydrofolate interconversion. The protein operates within amino-acid biosynthesis; glycine biosynthesis; glycine from L-serine: step 1/1. Functionally, catalyzes the reversible interconversion of serine and glycine with tetrahydrofolate (THF) serving as the one-carbon carrier. This reaction serves as the major source of one-carbon groups required for the biosynthesis of purines, thymidylate, methionine, and other important biomolecules. Also exhibits THF-independent aldolase activity toward beta-hydroxyamino acids, producing glycine and aldehydes, via a retro-aldol mechanism. The protein is Serine hydroxymethyltransferase of Brucella suis (strain ATCC 23445 / NCTC 10510).